A 236-amino-acid chain; its full sequence is DDCVCPGGREWASVASKADSQEARVNRLAGRVEALAENLRAGGDRLSHYKSEFRELEFRVDELEGNGCEPRHFQCGGSAMECISDLLTCDGSPDCANGADEDSDVCHIPPIAGTLLVGHLNTDHDFCTKRKPNEFDLFISSVQRSSYFQSRLKVKGNLQIKYTAEGRDQEDVLQVKGYYNFGTHQLVILPPEDDRLGIVCNFRAGNDDRCRAHIVHEASLEHCGDDFVFVKEDDHH.

The LDL-receptor class A domain maps to 66-108 (NGCEPRHFQCGGSAMECISDLLTCDGSPDCANGADEDSDVCHI). 3 cysteine pairs are disulfide-bonded: cysteine 68/cysteine 82, cysteine 75/cysteine 95, and cysteine 89/cysteine 106.

In terms of assembly, disulfide-linked dimer of identical chains. A model is proposed for the subunit structure of the Tylorrhynchus hemoglobin, consisting of 216 polypeptides chains, 192 heme-containing chains, and 24 linker chains.

Functionally, acts as a linker for the assembly of heme-containing chains in the construction of giant hemoglobin. This chain is Giant extracellular hemoglobin linker 2 chain, found in Tylorrhynchus heterochetus (Japanese palolo worm).